Consider the following 698-residue polypeptide: Polyribonucleotide nucleotidyltransferase (698 aa).

Residues D487 and D493 each contribute to the Mg(2+) site. In terms of domain architecture, KH spans 555–614 (PKIIQIQIDPQKIGDVVGQRGKTINAIIEQTGVKIDINDEGAVSVCGTDKDMMDKAINMI). Positions 624-692 (GQVFEGKVIS…KMGRISFSIK (69 aa)) constitute an S1 motif domain.

The protein belongs to the polyribonucleotide nucleotidyltransferase family. Requires Mg(2+) as cofactor.

Its subcellular location is the cytoplasm. It catalyses the reaction RNA(n+1) + phosphate = RNA(n) + a ribonucleoside 5'-diphosphate. In terms of biological role, involved in mRNA degradation. Catalyzes the phosphorolysis of single-stranded polyribonucleotides processively in the 3'- to 5'-direction. The protein is Polyribonucleotide nucleotidyltransferase of Lachnoclostridium phytofermentans (strain ATCC 700394 / DSM 18823 / ISDg) (Clostridium phytofermentans).